Here is a 1024-residue protein sequence, read N- to C-terminus: Beta-galactosidase (1024 aa).

Residues Asn103 and Asp202 each contribute to the substrate site. Asp202 contributes to the Na(+) binding site. Mg(2+) is bound by residues Glu417, His419, and Glu462. Residues Glu462 and 538–541 (EYAH) contribute to the substrate site. Catalysis depends on Glu462, which acts as the Proton donor. Glu538 (nucleophile) is an active-site residue. Asn598 contacts Mg(2+). Phe602 and Asn605 together coordinate Na(+). Substrate contacts are provided by Asn605 and Trp1000.

It belongs to the glycosyl hydrolase 2 family. In terms of assembly, homotetramer. The cofactor is Mg(2+). Requires Na(+) as cofactor.

The catalysed reaction is Hydrolysis of terminal non-reducing beta-D-galactose residues in beta-D-galactosides.. The chain is Beta-galactosidase from Escherichia coli O127:H6 (strain E2348/69 / EPEC).